The following is a 117-amino-acid chain: Probable non-functional immunoglobulin kappa variable 1D-42 (117 aa).

The signal sequence occupies residues Met1–Phe22. Positions Asp23–Cys45 are framework-1. One can recognise an Ig-like domain in the interval Asp23–Pro117. A disulfide bridge links Cys45 with Cys110. A complementarity-determining-1 region spans residues Trp46 to Ala56. The framework-2 stretch occupies residues Trp57–Tyr71. The interval Asp72 to Pro78 is complementarity-determining-2. The segment at Gly79–Cys110 is framework-3. A complementarity-determining-3 region spans residues Lys111–Pro117.

In terms of assembly, immunoglobulins are composed of two identical heavy chains and two identical light chains; disulfide-linked.

It localises to the secreted. The protein resides in the cell membrane. Functionally, probable non-functional open reading frame (ORF) of V region of the variable domain of immunoglobulin light chains. Non-functional ORF generally cannot participate in the synthesis of a productive immunoglobulin chain due to altered V-(D)-J or switch recombination and/or splicing site (at mRNA level) and/or conserved amino acid change (protein level). Immunoglobulins, also known as antibodies, are membrane-bound or secreted glycoproteins produced by B lymphocytes. In the recognition phase of humoral immunity, the membrane-bound immunoglobulins serve as receptors which, upon binding of a specific antigen, trigger the clonal expansion and differentiation of B lymphocytes into immunoglobulins-secreting plasma cells. Secreted immunoglobulins mediate the effector phase of humoral immunity, which results in the elimination of bound antigens. The antigen binding site is formed by the variable domain of one heavy chain, together with that of its associated light chain. Thus, each immunoglobulin has two antigen binding sites with remarkable affinity for a particular antigen. The variable domains are assembled by a process called V-(D)-J rearrangement and can then be subjected to somatic hypermutations which, after exposure to antigen and selection, allow affinity maturation for a particular antigen. The chain is Probable non-functional immunoglobulin kappa variable 1D-42 from Homo sapiens (Human).